A 164-amino-acid polypeptide reads, in one-letter code: Putative L,D-transpeptidase YkuD (164 aa).

The LysM domain maps to 2 to 45 (LTYQVKQGDTLNSIAADFRISTAALLQANPSLQAGLTAGQSIVI). The 108-residue stretch at 56–163 (YHIAVSIGAK…VPNGTRVTIN (108 aa)) folds into the L,D-TPase catalytic domain. The active-site Proton donor/acceptor is histidine 123. The active-site Nucleophile is the cysteine 139.

This sequence belongs to the YkuD family. Monomer.

It is found in the spore wall. Its pathway is cell wall biogenesis; peptidoglycan biosynthesis. Its function is as follows. Probable enzyme that may play an important role in cell wall biology. This Bacillus subtilis (strain 168) protein is Putative L,D-transpeptidase YkuD (ykuD).